A 319-amino-acid chain; its full sequence is 4-hydroxy-3-methylbut-2-enyl diphosphate reductase (319 aa).

Cys18 is a binding site for [4Fe-4S] cluster. 2 residues coordinate (2E)-4-hydroxy-3-methylbut-2-enyl diphosphate: His47 and His81. Residues His47 and His81 each contribute to the dimethylallyl diphosphate site. Positions 47 and 81 each coordinate isopentenyl diphosphate. Cys103 lines the [4Fe-4S] cluster pocket. (2E)-4-hydroxy-3-methylbut-2-enyl diphosphate is bound at residue His131. His131 lines the dimethylallyl diphosphate pocket. His131 provides a ligand contact to isopentenyl diphosphate. Glu133 (proton donor) is an active-site residue. Thr172 contacts (2E)-4-hydroxy-3-methylbut-2-enyl diphosphate. Position 202 (Cys202) interacts with [4Fe-4S] cluster. Ser230, Ser231, Asn232, and Ser275 together coordinate (2E)-4-hydroxy-3-methylbut-2-enyl diphosphate. Ser230, Ser231, Asn232, and Ser275 together coordinate dimethylallyl diphosphate. Residues Ser230, Ser231, Asn232, and Ser275 each coordinate isopentenyl diphosphate.

Belongs to the IspH family. [4Fe-4S] cluster is required as a cofactor.

It carries out the reaction isopentenyl diphosphate + 2 oxidized [2Fe-2S]-[ferredoxin] + H2O = (2E)-4-hydroxy-3-methylbut-2-enyl diphosphate + 2 reduced [2Fe-2S]-[ferredoxin] + 2 H(+). The enzyme catalyses dimethylallyl diphosphate + 2 oxidized [2Fe-2S]-[ferredoxin] + H2O = (2E)-4-hydroxy-3-methylbut-2-enyl diphosphate + 2 reduced [2Fe-2S]-[ferredoxin] + 2 H(+). It functions in the pathway isoprenoid biosynthesis; dimethylallyl diphosphate biosynthesis; dimethylallyl diphosphate from (2E)-4-hydroxy-3-methylbutenyl diphosphate: step 1/1. Its pathway is isoprenoid biosynthesis; isopentenyl diphosphate biosynthesis via DXP pathway; isopentenyl diphosphate from 1-deoxy-D-xylulose 5-phosphate: step 6/6. Functionally, catalyzes the conversion of 1-hydroxy-2-methyl-2-(E)-butenyl 4-diphosphate (HMBPP) into a mixture of isopentenyl diphosphate (IPP) and dimethylallyl diphosphate (DMAPP). Acts in the terminal step of the DOXP/MEP pathway for isoprenoid precursor biosynthesis. The polypeptide is 4-hydroxy-3-methylbut-2-enyl diphosphate reductase (Methylocella silvestris (strain DSM 15510 / CIP 108128 / LMG 27833 / NCIMB 13906 / BL2)).